A 256-amino-acid chain; its full sequence is Deoxyribose-phosphate aldolase (256 aa).

Asp102 functions as the Proton donor/acceptor in the catalytic mechanism. Lys165 serves as the catalytic Schiff-base intermediate with acetaldehyde. Lys197 acts as the Proton donor/acceptor in catalysis.

It belongs to the DeoC/FbaB aldolase family. DeoC type 2 subfamily.

The protein localises to the cytoplasm. It carries out the reaction 2-deoxy-D-ribose 5-phosphate = D-glyceraldehyde 3-phosphate + acetaldehyde. The protein operates within carbohydrate degradation; 2-deoxy-D-ribose 1-phosphate degradation; D-glyceraldehyde 3-phosphate and acetaldehyde from 2-deoxy-alpha-D-ribose 1-phosphate: step 2/2. In terms of biological role, catalyzes a reversible aldol reaction between acetaldehyde and D-glyceraldehyde 3-phosphate to generate 2-deoxy-D-ribose 5-phosphate. The polypeptide is Deoxyribose-phosphate aldolase (Shewanella baltica (strain OS155 / ATCC BAA-1091)).